The chain runs to 113 residues: Nucleoid-associated protein Cthe_2143 (113 aa).

This sequence belongs to the YbaB/EbfC family. Homodimer.

The protein resides in the cytoplasm. It is found in the nucleoid. Binds to DNA and alters its conformation. May be involved in regulation of gene expression, nucleoid organization and DNA protection. The chain is Nucleoid-associated protein Cthe_2143 from Acetivibrio thermocellus (strain ATCC 27405 / DSM 1237 / JCM 9322 / NBRC 103400 / NCIMB 10682 / NRRL B-4536 / VPI 7372) (Clostridium thermocellum).